A 117-amino-acid polypeptide reads, in one-letter code: Large ribosomal subunit protein bL19 (117 aa).

It belongs to the bacterial ribosomal protein bL19 family.

This protein is located at the 30S-50S ribosomal subunit interface and may play a role in the structure and function of the aminoacyl-tRNA binding site. In Thioalkalivibrio sulfidiphilus (strain HL-EbGR7), this protein is Large ribosomal subunit protein bL19.